The chain runs to 353 residues: Photosystem II protein D1 (353 aa).

Thr-2 is subject to N-acetylthreonine. Residue Thr-2 is modified to Phosphothreonine. A run of 3 helical transmembrane segments spans residues 29–46, 118–133, and 142–156; these read YIGW…TATS, HFLL…EWEL, and WIAV…AATA. Chlorophyll a is bound at residue His-118. A pheophytin a-binding site is contributed by Tyr-126. The [CaMn4O5] cluster site is built by Asp-170 and Glu-189. Residues 197–218 form a helical membrane-spanning segment; it reads FHMLGVAGVFGGSLFSAMHGSL. His-198 contacts chlorophyll a. A quinone-binding positions include His-215 and 264–265; that span reads SF. Position 215 (His-215) interacts with Fe cation. His-272 serves as a coordination point for Fe cation. The chain crosses the membrane as a helical span at residues 274-288; sequence FLAAWPVVGIWFTAL. The [CaMn4O5] cluster site is built by His-332, Glu-333, Asp-342, and Ala-344. A propeptide spanning residues 345-353 is cleaved from the precursor; the sequence is AMEAPSVNG.

It belongs to the reaction center PufL/M/PsbA/D family. In terms of assembly, PSII is composed of 1 copy each of membrane proteins PsbA, PsbB, PsbC, PsbD, PsbE, PsbF, PsbH, PsbI, PsbJ, PsbK, PsbL, PsbM, PsbT, PsbX, PsbY, PsbZ, Psb30/Ycf12, at least 3 peripheral proteins of the oxygen-evolving complex and a large number of cofactors. It forms dimeric complexes. The cofactor is The D1/D2 heterodimer binds P680, chlorophylls that are the primary electron donor of PSII, and subsequent electron acceptors. It shares a non-heme iron and each subunit binds pheophytin, quinone, additional chlorophylls, carotenoids and lipids. D1 provides most of the ligands for the Mn4-Ca-O5 cluster of the oxygen-evolving complex (OEC). There is also a Cl(-1) ion associated with D1 and D2, which is required for oxygen evolution. The PSII complex binds additional chlorophylls, carotenoids and specific lipids.. Post-translationally, tyr-161 forms a radical intermediate that is referred to as redox-active TyrZ, YZ or Y-Z. In terms of processing, C-terminally processed by CTPA; processing is essential to allow assembly of the oxygen-evolving complex and thus photosynthetic growth.

The protein localises to the plastid. It localises to the chloroplast thylakoid membrane. It carries out the reaction 2 a plastoquinone + 4 hnu + 2 H2O = 2 a plastoquinol + O2. Photosystem II (PSII) is a light-driven water:plastoquinone oxidoreductase that uses light energy to abstract electrons from H(2)O, generating O(2) and a proton gradient subsequently used for ATP formation. It consists of a core antenna complex that captures photons, and an electron transfer chain that converts photonic excitation into a charge separation. The D1/D2 (PsbA/PsbD) reaction center heterodimer binds P680, the primary electron donor of PSII as well as several subsequent electron acceptors. This is Photosystem II protein D1 from Phaseolus vulgaris (Kidney bean).